A 336-amino-acid chain; its full sequence is E3 ubiquitin-protein ligase RING2 (336 aa).

The interaction with HIP2 stretch occupies residues 2–179; sequence TQTVQTNGVQ…AEDNGDSSHC (178 aa). The segment at 51–91 adopts an RING-type zinc-finger fold; sequence CPICLDMLKNTMTTKECLHRFCADCIITALRSGNKECPTCR. The segment at 93–98 is interaction with nucleosomes via an acidic patch on histone H2A and histone H2B; that stretch reads KLVSKR. The disordered stretch occupies residues 158–218; that stretch reads RGKKHQIENG…NATENGGGDI (61 aa). The segment covering 176-190 has biased composition (polar residues); sequence SSHCSNASVHSNQEA.

As to quaternary structure, component of chromatin-associated Polycomb (PcG) complexes. Component of a PRC1-like complex. Component of some MLL1/MLL complex.

Its subcellular location is the nucleus. It localises to the cytoplasm. It is found in the chromosome. It carries out the reaction S-ubiquitinyl-[E2 ubiquitin-conjugating enzyme]-L-cysteine + [acceptor protein]-L-lysine = [E2 ubiquitin-conjugating enzyme]-L-cysteine + N(6)-ubiquitinyl-[acceptor protein]-L-lysine.. It functions in the pathway protein modification; protein ubiquitination. In terms of biological role, E3 ubiquitin-protein ligase that mediates monoubiquitination of 'Lys-119' of histone H2A (H2AK119Ub), thereby playing a central role in histone code and gene regulation. H2AK119Ub gives a specific tag for epigenetic transcriptional repression. Essential component of a Polycomb group (PcG) multiprotein PRC1-like complex, a complex class required to maintain the transcriptionally repressive state of many genes, including Hox genes, throughout development. PcG PRC1 complex acts via chromatin remodeling and modification of histones, rendering chromatin heritably changed in its expressibility. The sequence is that of E3 ubiquitin-protein ligase RING2 (rnf2) from Danio rerio (Zebrafish).